A 361-amino-acid polypeptide reads, in one-letter code: 45 kDa calcium-binding protein (361 aa).

An N-terminal signal peptide occupies residues 1–35; it reads MVWLVAMTSRQRSLCGLAAHGLWFLGLVLLMDATA. Asparagine 39 carries an N-linked (GlcNAc...) asparagine glycan. 2 consecutive EF-hand domains span residues 97 to 132 and 136 to 171; these read RSRR…KTAE and EAVK…SKGH. Position 98 is a phosphoserine (serine 98). The Ca(2+) site is built by aspartate 110, asparagine 112, aspartate 114, arginine 116, glutamate 121, aspartate 149, aspartate 151, aspartate 153, histidine 155, and glutamate 160. Threonine 192 bears the Phosphothreonine mark. 4 EF-hand domains span residues 196–231, 232–267, 277–312, and 313–348; these read LGNL…HSRG, MLKF…TVEN, WVKD…MNEY, and NALN…FTGS. Aspartate 212 is a binding site for Ca(2+). A Phosphothreonine modification is found at threonine 216. Ca(2+) is bound by residues glutamate 219, aspartate 245, aspartate 247, aspartate 249, glutamine 251, and glutamate 256. Position 264 is a phosphothreonine (threonine 264). The Ca(2+) site is built by aspartate 290, asparagine 292, and aspartate 294. The residue at position 298 (threonine 298) is a Phosphothreonine. Residues glutamate 301, aspartate 326, asparagine 328, asparagine 330, histidine 332, and glutamate 337 each coordinate Ca(2+). Positions 308-361 are necessary for intracellular retention in Golgi apparatus lumen; the sequence is PMNEYNALNEAKQMIAIADENQNHHLEPEEILKYSEFFTGSKLMDYARNVHEEF.

Belongs to the CREC family. In terms of assembly, a membrane-associated isoform interacts with STX3 and STXBP1. As to expression, a membrane-associated isoform is expressed in acini of the pancreas (at protein level). Ubiquitous.

It is found in the golgi apparatus lumen. In terms of biological role, a membrane-associated isoform may be involved in the exocytosis of zymogens by pancreatic acini. May regulate calcium-dependent activities in the endoplasmic reticulum lumen or post-ER compartment. The protein is 45 kDa calcium-binding protein (Sdf4) of Rattus norvegicus (Rat).